The primary structure comprises 201 residues: Large ribosomal subunit protein uL4 (201 aa).

The disordered stretch occupies residues Arg-39–Arg-72. Polar residues predominate over residues Thr-42–Lys-53.

Belongs to the universal ribosomal protein uL4 family. Part of the 50S ribosomal subunit.

In terms of biological role, one of the primary rRNA binding proteins, this protein initially binds near the 5'-end of the 23S rRNA. It is important during the early stages of 50S assembly. It makes multiple contacts with different domains of the 23S rRNA in the assembled 50S subunit and ribosome. Its function is as follows. Forms part of the polypeptide exit tunnel. The protein is Large ribosomal subunit protein uL4 of Deinococcus deserti (strain DSM 17065 / CIP 109153 / LMG 22923 / VCD115).